A 378-amino-acid polypeptide reads, in one-letter code: AT-hook motif nuclear-localized protein 5 (378 aa).

Disordered stretches follow at residues 30-70, 88-160, and 302-378; these read QVAS…AEHR, VQPT…GRKQ, and NNNK…LTRG. Residues 104–113 are compositionally biased toward basic residues; sequence VKKKRGRPRK. The Bipartite nuclear localization signal signature appears at 105-113; it reads KKKRGRPRK. 2 DNA-binding regions (a.T hook) span residues 105 to 117 and 147 to 159; these read KKKRGRPRKYVPD and KRARGRPPGTGRK. Residues 171–314 enclose the PPC domain; it reads TSAGLAFAPH…KTIKQEIKPK (144 aa). Polar residues-rich tracts occupy residues 316–327 and 335–345; these read EPTNSEMETTPG and STGQHTPQNFP.

As to quaternary structure, interacts with AHL29.

It localises to the nucleus. Functionally, transcription factor that specifically binds AT-rich DNA sequences related to the nuclear matrix attachment regions (MARs). In Arabidopsis thaliana (Mouse-ear cress), this protein is AT-hook motif nuclear-localized protein 5.